The primary structure comprises 349 residues: Lipoyl synthase (349 aa).

Residues C55, C60, C66, C81, C85, C88, and S292 each contribute to the [4Fe-4S] cluster site. In terms of domain architecture, Radical SAM core spans W67–K281. The segment at L321 to R349 is disordered.

Belongs to the radical SAM superfamily. Lipoyl synthase family. It depends on [4Fe-4S] cluster as a cofactor.

Its subcellular location is the cytoplasm. It catalyses the reaction [[Fe-S] cluster scaffold protein carrying a second [4Fe-4S](2+) cluster] + N(6)-octanoyl-L-lysyl-[protein] + 2 oxidized [2Fe-2S]-[ferredoxin] + 2 S-adenosyl-L-methionine + 4 H(+) = [[Fe-S] cluster scaffold protein] + N(6)-[(R)-dihydrolipoyl]-L-lysyl-[protein] + 4 Fe(3+) + 2 hydrogen sulfide + 2 5'-deoxyadenosine + 2 L-methionine + 2 reduced [2Fe-2S]-[ferredoxin]. Its pathway is protein modification; protein lipoylation via endogenous pathway; protein N(6)-(lipoyl)lysine from octanoyl-[acyl-carrier-protein]: step 2/2. Catalyzes the radical-mediated insertion of two sulfur atoms into the C-6 and C-8 positions of the octanoyl moiety bound to the lipoyl domains of lipoate-dependent enzymes, thereby converting the octanoylated domains into lipoylated derivatives. The polypeptide is Lipoyl synthase (Corynebacterium jeikeium (strain K411)).